Consider the following 607-residue polypeptide: Siderophore iron transporter mirC (607 aa).

The next 12 membrane-spanning stretches (helical) occupy residues 67–89, 129–148, 186–208, 223–245, 279–301, 311–328, 349–368, 388–410, 417–436, 446–468, 481–503, and 557–574; these read LVIA…QTIM, VFGR…LGYI, SLLN…VWIG, WGYG…SLLL, IFGL…LAAN, IVAM…LPFW, TALA…YFSV, GRVT…ILIK, VYVT…MLLY, VLGT…QLGV, TAMF…GAVW, and LLVL…LSLL. A compositionally biased stretch (basic and acidic residues) spans 584 to 593; the sequence is SESSDHDDAS. The disordered stretch occupies residues 584–607; sequence SESSDHDDASPRNGLGPGERAKRT.

The protein belongs to the major facilitator superfamily.

Its subcellular location is the membrane. This is Siderophore iron transporter mirC (mirC) from Emericella nidulans (strain FGSC A4 / ATCC 38163 / CBS 112.46 / NRRL 194 / M139) (Aspergillus nidulans).